A 222-amino-acid chain; its full sequence is Octanoyltransferase (222 aa).

The BPL/LPL catalytic domain occupies 32-207; it reads RDRPDVLMLL…AFARVFGVQC (176 aa). Substrate-binding positions include 72 to 79, 139 to 141, and 152 to 154; these read RGGEVTYH, ALG, and GFA. The active-site Acyl-thioester intermediate is the Cys-170.

Belongs to the LipB family.

It is found in the cytoplasm. It carries out the reaction octanoyl-[ACP] + L-lysyl-[protein] = N(6)-octanoyl-L-lysyl-[protein] + holo-[ACP] + H(+). Its pathway is protein modification; protein lipoylation via endogenous pathway; protein N(6)-(lipoyl)lysine from octanoyl-[acyl-carrier-protein]: step 1/2. Catalyzes the transfer of endogenously produced octanoic acid from octanoyl-acyl-carrier-protein onto the lipoyl domains of lipoate-dependent enzymes. Lipoyl-ACP can also act as a substrate although octanoyl-ACP is likely to be the physiological substrate. The protein is Octanoyltransferase of Gloeobacter violaceus (strain ATCC 29082 / PCC 7421).